Consider the following 425-residue polypeptide: Proline iminopeptidase (425 aa).

Residues 52-315 (PWLLYLQGGP…EFPALAWAQG (264 aa)) form the AB hydrolase-1 domain. The Nucleophile role is filled by Ser-146. Asp-351 is an active-site residue. The active-site Proton donor is His-404.

The protein belongs to the peptidase S33 family. In terms of assembly, homotetramer.

The protein resides in the cytoplasm. It catalyses the reaction Release of N-terminal proline from a peptide.. Functionally, higher activity toward long peptides. Acts on hydroxyproline beta-naphthylamide with almost as high an activity as on proline beta-naphthylamide. The polypeptide is Proline iminopeptidase (pip) (Aeromonas sobria).